The primary structure comprises 226 residues: EEF1A lysine methyltransferase 1 (226 aa).

S2 is subject to N-acetylserine. S2 bears the Phosphoserine mark.

It belongs to the class I-like SAM-binding methyltransferase superfamily. EFM5 family.

The protein resides in the cytoplasm. It carries out the reaction L-lysyl-[protein] + 3 S-adenosyl-L-methionine = N(6),N(6),N(6)-trimethyl-L-lysyl-[protein] + 3 S-adenosyl-L-homocysteine + 3 H(+). Functionally, protein-lysine methyltransferase that selectively catalyzes the trimethylation of EEF1A at 'Lys-79'. The chain is EEF1A lysine methyltransferase 1 from Bos taurus (Bovine).